The primary structure comprises 519 residues: Aldehyde dehydrogenase X, mitochondrial (519 aa).

A mitochondrion-targeting transit peptide spans 1 to 19 (MLTARLLLPRLLCLQGRTT). Residue K53 is modified to N6-acetyllysine. K54 bears the N6-acetyllysine; alternate mark. K54 carries the N6-succinyllysine; alternate modification. Position 83 is an N6-succinyllysine (K83). 264–269 (GSTEVG) is a binding site for NAD(+). E287 serves as the catalytic Proton acceptor. The active-site Nucleophile is C321. K366, K385, K401, K416, and K428 each carry N6-acetyllysine; alternate. N6-succinyllysine; alternate occurs at positions 366, 385, 401, 416, and 428. Residue K431 is modified to N6-acetyllysine.

This sequence belongs to the aldehyde dehydrogenase family. As to quaternary structure, homotetramer.

The protein resides in the mitochondrion matrix. It carries out the reaction an aldehyde + NAD(+) + H2O = a carboxylate + NADH + 2 H(+). Its pathway is alcohol metabolism; ethanol degradation; acetate from ethanol: step 2/2. ALDHs play a major role in the detoxification of alcohol-derived acetaldehyde. They are involved in the metabolism of corticosteroids, biogenic amines, neurotransmitters, and lipid peroxidation. The sequence is that of Aldehyde dehydrogenase X, mitochondrial (Aldh1b1) from Mus musculus (Mouse).